We begin with the raw amino-acid sequence, 423 residues long: Cyclin-B2-1 (423 aa).

A disordered region spans residues 1-61 (MDRASENRRL…EKSGKEEQKP (61 aa)). Over residues 49–60 (PMLEKSGKEEQK) the composition is skewed to basic and acidic residues.

The protein belongs to the cyclin family. Cyclin AB subfamily. Interacts with CDKB2-1. In terms of tissue distribution, expressed in the intercalary meristem and the elongation zone of internodes. Expressed in adventitious roots at all nodes under submergence conditions.

In terms of biological role, involved in the control of the cell cycle at the G2/M (mitosis) transition. May activate CDKB2-1 kinase. This chain is Cyclin-B2-1 (CYCB2-1), found in Oryza sativa subsp. indica (Rice).